The primary structure comprises 2179 residues: Genome polyprotein (2179 aa).

The tract at residues 1–20 (MGAQVSTQKSGSHENQNILT) is disordered. A lipid anchor (N-myristoyl glycine; by host) is attached at glycine 2. Topologically, residues 2-1491 (GAQVSTQKSG…AMNQASMIIN (1490 aa)) are cytoplasmic. An amphipathic alpha-helix region spans residues 564–584 (ALTEGLGDELEEVIVEKTKQT). Active-site for protease 2A activity residues include histidine 876 and aspartate 894. Residues cysteine 911 and cysteine 913 each contribute to the Zn(2+) site. Cysteine 965 acts as the For protease 2A activity in catalysis. Zn(2+) contacts are provided by cysteine 971 and histidine 973. Residues 1101–1173 (NDGWFRKFND…HISNPTQEKR (73 aa)) form a membrane-binding region. Residues 1101–1239 (NDGWFRKFND…TPGSGKSLTT (139 aa)) are oligomerization. The interval 1122–1126 (ANKIS) is RNA-binding. Residues 1205–1361 (KNKMVNYMQF…TTYTKNGKLN (157 aa)) enclose the SF3 helicase domain. Zn(2+) contacts are provided by cysteine 1369, cysteine 1372, cysteine 1381, and cysteine 1386. A C4-type zinc finger spans residues 1369–1386 (CKDCHQPSNFKKCCPLVC). Residues 1413–1420 (DFKSKMQI) are RNA-binding. The tract at residues 1424-1429 (LETLFQ) is oligomerization. The stretch at 1492–1507 (TILMFVSTLGIVYVIY) is an intramembrane region. Topologically, residues 1508-2179 (KLFAQTQGPY…VLRRRWLDLF (672 aa)) are cytoplasmic. Tyrosine 1517 carries the O-(5'-phospho-RNA)-tyrosine modification. A Peptidase C3 domain is found at 1538–1715 (GPNTEFALSL…FSAQLKKQYF (178 aa)). Residues histidine 1577, glutamate 1608, and cysteine 1683 each act as for protease 3C activity in the active site. The region spanning 1946 to 2060 (GHLMAFDYSN…SYPYELDPQV (115 aa)) is the RdRp catalytic domain. 2 residues coordinate Mg(2+): aspartate 1952 and aspartate 2046.

This sequence belongs to the picornaviruses polyprotein family. As to quaternary structure, interacts with capsid protein VP1 and capsid protein VP3 to form heterotrimeric protomers. Interacts with capsid protein VP0, and capsid protein VP3 to form heterotrimeric protomers. Five protomers subsequently associate to form pentamers which serve as building blocks for the capsid. Interacts with capsid protein VP2, capsid protein VP3 and capsid protein VP4 following cleavage of capsid protein VP0. Interacts with host ICAM1. In terms of assembly, interacts with capsid protein VP1 and capsid protein VP3 in the mature capsid. As to quaternary structure, interacts with capsid protein VP0 and capsid protein VP1 to form heterotrimeric protomers. Five protomers subsequently associate to form pentamers which serve as building blocks for the capsid. Interacts with capsid protein VP4 in the mature capsid. Interacts with protein 2C; this interaction may be important for virion morphogenesis. Interacts with capsid protein VP1 and capsid protein VP3. In terms of assembly, homodimer. As to quaternary structure, homohexamer; forms a hexameric ring structure with 6-fold symmetry characteristic of AAA+ ATPases. Interacts (via N-terminus) with host RTN3 (via reticulon domain); this interaction is important for viral replication. Interacts with capsid protein VP3; this interaction may be important for virion morphogenesis. Interacts with protein 3CD. In terms of assembly, homodimer. Interacts with host GBF1. Interacts (via GOLD domain) with host ACBD3 (via GOLD domain); this interaction allows the formation of a viral protein 3A/ACBD3 heterotetramer with a 2:2 stoichiometry, which will stimulate the recruitment of host PI4KB in order to synthesize PI4P at the viral RNA replication sites. As to quaternary structure, interacts with RNA-directed RNA polymerase. Interacts with protein 3AB and with RNA-directed RNA polymerase. In terms of assembly, interacts with Viral protein genome-linked and with protein 3CD. It depends on Mg(2+) as a cofactor. In terms of processing, specific enzymatic cleavages in vivo by the viral proteases yield processing intermediates and the mature proteins. Post-translationally, myristoylation is required for the formation of pentamers during virus assembly. Further assembly of 12 pentamers and a molecule of genomic RNA generates the provirion. During virion maturation, immature virions are rendered infectious following cleavage of VP0 into VP4 and VP2. This maturation seems to be an autocatalytic event triggered by the presence of RNA in the capsid and it is followed by a conformational change infectious virion. In terms of processing, myristoylation is required during RNA encapsidation and formation of the mature virus particle. Post-translationally, VPg is uridylylated by the polymerase into VPg-pUpU. This acts as a nucleotide-peptide primer for the genomic RNA replication.

The protein localises to the virion. The protein resides in the host cytoplasm. It is found in the host cytoplasmic vesicle membrane. It localises to the host nucleus. It catalyses the reaction a ribonucleoside 5'-triphosphate + H2O = a ribonucleoside 5'-diphosphate + phosphate + H(+). The enzyme catalyses Selective cleavage of Tyr-|-Gly bond in the picornavirus polyprotein.. It carries out the reaction RNA(n) + a ribonucleoside 5'-triphosphate = RNA(n+1) + diphosphate. The catalysed reaction is Selective cleavage of Gln-|-Gly bond in the poliovirus polyprotein. In other picornavirus reactions Glu may be substituted for Gln, and Ser or Thr for Gly.. Its activity is regulated as follows. Replication or transcription is subject to high level of random mutations by the nucleotide analog ribavirin. In terms of biological role, forms an icosahedral capsid of pseudo T=3 symmetry with capsid proteins VP2 and VP3. The capsid is 300 Angstroms in diameter, composed of 60 copies of each capsid protein and enclosing the viral positive strand RNA genome. Capsid protein VP1 mainly forms the vertices of the capsid. Capsid protein VP1 interacts with host ICAM1 to provide virion attachment to target host cells. This attachment induces virion internalization. Tyrosine kinases are probably involved in the entry process. After binding to its receptor, the capsid undergoes conformational changes. Capsid protein VP1 N-terminus (that contains an amphipathic alpha-helix) and capsid protein VP4 are externalized. Together, they shape a pore in the host membrane through which viral genome is translocated to host cell cytoplasm. After genome has been released, the channel shrinks. Forms an icosahedral capsid of pseudo T=3 symmetry with capsid proteins VP2 and VP3. The capsid is 300 Angstroms in diameter, composed of 60 copies of each capsid protein and enclosing the viral positive strand RNA genome. Its function is as follows. Lies on the inner surface of the capsid shell. After binding to the host receptor, the capsid undergoes conformational changes. Capsid protein VP4 is released, Capsid protein VP1 N-terminus is externalized, and together, they shape a pore in the host membrane through which the viral genome is translocated into the host cell cytoplasm. Functionally, component of immature procapsids, which is cleaved into capsid proteins VP4 and VP2 after maturation. Allows the capsid to remain inactive before the maturation step. In terms of biological role, cysteine protease that cleaves viral polyprotein and specific host proteins. It is responsible for the autocatalytic cleavage between the P1 and P2 regions, which is the first cleavage occurring in the polyprotein. Also cleaves the host translation initiation factor EIF4G1, in order to shut down the capped cellular mRNA translation. Inhibits the host nucleus-cytoplasm protein and RNA trafficking by cleaving host members of the nuclear pores including NUP62 and NUP153. Counteracts stress granule formation probably by antagonizing its assembly or promoting its dissassembly. Plays an essential role in the virus replication cycle by acting as a viroporin. Creates a pore in the host endoplasmic reticulum and as a consequence releases Ca2+ in the cytoplasm of infected cell. In turn, high levels of cytoplasmic calcium may trigger membrane trafficking and transport of viral ER-associated proteins to viroplasms, sites of viral genome replication. Its function is as follows. Induces and associates with structural rearrangements of intracellular membranes. Displays RNA-binding, nucleotide binding and NTPase activities. May play a role in virion morphogenesis and viral RNA encapsidation by interacting with the capsid protein VP3. Functionally, localizes the viral replication complex to the surface of membranous vesicles. Together with protein 3CD binds the Cis-Active RNA Element (CRE) which is involved in RNA synthesis initiation. Acts as a cofactor to stimulate the activity of 3D polymerase, maybe through a nucleid acid chaperone activity. In terms of biological role, localizes the viral replication complex to the surface of membranous vesicles. It inhibits host cell endoplasmic reticulum-to-Golgi apparatus transport and causes the disassembly of the Golgi complex, possibly through GBF1 interaction. This would result in depletion of MHC, trail receptors and IFN receptors at the host cell surface. Plays an essential role in viral RNA replication by recruiting ACBD3 and PI4KB at the viral replication sites, thereby allowing the formation of the rearranged membranous structures where viral replication takes place. Acts as a primer for viral RNA replication and remains covalently bound to viral genomic RNA. VPg is uridylylated prior to priming replication into VPg-pUpU. The oriI viral genomic sequence may act as a template for this. The VPg-pUpU is then used as primer on the genomic RNA poly(A) by the RNA-dependent RNA polymerase to replicate the viral genome. During genome replication, the VPg-RNA linkage is removed by the host TDP2, thereby accelerating replication. During the late stage of the replication cycle, host TDP2 is excluded from sites of viral RNA synthesis and encapsidation, allowing for the generation of progeny virions. Its function is as follows. Involved in the viral replication complex and viral polypeptide maturation. It exhibits protease activity with a specificity and catalytic efficiency that is different from protease 3C. Protein 3CD lacks polymerase activity. Protein 3CD binds to the 5'UTR of the viral genome. Functionally, major viral protease that mediates proteolytic processing of the polyprotein. Cleaves host EIF5B, contributing to host translation shutoff. Cleaves also host PABPC1, contributing to host translation shutoff. Cleaves host NLRP1, triggers host N-glycine-mediated degradation of the autoinhibitory NLRP1 N-terminal fragment. In terms of biological role, replicates the viral genomic RNA on the surface of intracellular membranes. May form linear arrays of subunits that propagate along a strong head-to-tail interaction called interface-I. Covalently attaches UMP to a tyrosine of VPg, which is used to prime RNA synthesis. The positive stranded RNA genome is first replicated at virus induced membranous vesicles, creating a dsRNA genomic replication form. This dsRNA is then used as template to synthesize positive stranded RNA genomes. ss(+)RNA genomes are either translated, replicated or encapsidated. This is Genome polyprotein from Homo sapiens (Human).